The sequence spans 204 residues: INSIG protein homolog (204 aa).

A run of 5 helical transmembrane segments spans residues 5-27 (ISEAVVLFLLGAVAALIGDHSHV), 47-64 (FWFPILVGAATASLAELR), 76-97 (ARQALGGVAAVVGTYVTTALVH), 101-118 (VVPVTALVCAAAAITWCV), and 124-145 (GAACGVVIAVIGPAVEIALVQL). H26 lines the a 1,2-diacyl-sn-glycerol pocket. An a 1,2-diacyl-sn-glycerol-binding site is contributed by Y150. The helical transmembrane segment at 162–179 (PFLAPLYFAFGVVAALLG) threads the bilayer.

Belongs to the INSIG family. As to quaternary structure, homotrimer.

The protein resides in the membrane. Functionally, diacylglycerol-binding protein. The polypeptide is INSIG protein homolog (Mycolicibacterium vanbaalenii (strain DSM 7251 / JCM 13017 / BCRC 16820 / KCTC 9966 / NRRL B-24157 / PYR-1) (Mycobacterium vanbaalenii)).